Consider the following 89-residue polypeptide: Small ribosomal subunit protein uS15 (89 aa).

This sequence belongs to the universal ribosomal protein uS15 family. As to quaternary structure, part of the 30S ribosomal subunit. Forms a bridge to the 50S subunit in the 70S ribosome, contacting the 23S rRNA.

One of the primary rRNA binding proteins, it binds directly to 16S rRNA where it helps nucleate assembly of the platform of the 30S subunit by binding and bridging several RNA helices of the 16S rRNA. Its function is as follows. Forms an intersubunit bridge (bridge B4) with the 23S rRNA of the 50S subunit in the ribosome. This chain is Small ribosomal subunit protein uS15, found in Halalkalibacterium halodurans (strain ATCC BAA-125 / DSM 18197 / FERM 7344 / JCM 9153 / C-125) (Bacillus halodurans).